A 950-amino-acid polypeptide reads, in one-letter code: Protein translocase subunit SecA 1 (950 aa).

ATP is bound by residues Gln-83, 101-105 (GEGKT), and Asp-490. A disordered region spans residues 864-950 (EGGAGRKNAA…AKPPKSVKKR (87 aa)). The span at 873–888 (AAREEAPSRLRAKGIE) shows a compositional bias: basic and acidic residues.

It belongs to the SecA family. In terms of assembly, monomer and homodimer. Part of the essential Sec protein translocation apparatus which comprises SecA, SecYEG and auxiliary proteins SecDF. Other proteins may also be involved.

The protein localises to the cell membrane. It is found in the cytoplasm. It carries out the reaction ATP + H2O + cellular proteinSide 1 = ADP + phosphate + cellular proteinSide 2.. Functionally, part of the Sec protein translocase complex. Interacts with the SecYEG preprotein conducting channel. Has a central role in coupling the hydrolysis of ATP to the transfer of proteins into and across the cell membrane, serving as an ATP-driven molecular motor driving the stepwise translocation of polypeptide chains across the membrane. The chain is Protein translocase subunit SecA 1 from Mycobacterium ulcerans (strain Agy99).